Consider the following 500-residue polypeptide: L-arabinose isomerase (500 aa).

Positions 306, 333, 350, and 450 each coordinate Mn(2+).

It belongs to the arabinose isomerase family. In terms of assembly, homohexamer. The cofactor is Mn(2+).

It carries out the reaction beta-L-arabinopyranose = L-ribulose. Its pathway is carbohydrate degradation; L-arabinose degradation via L-ribulose; D-xylulose 5-phosphate from L-arabinose (bacterial route): step 1/3. Catalyzes the conversion of L-arabinose to L-ribulose. The chain is L-arabinose isomerase from Yersinia pestis (strain Pestoides F).